A 198-amino-acid polypeptide reads, in one-letter code: Elongation factor Ts (198 aa).

The tract at residues Thr-82–Val-85 is involved in Mg(2+) ion dislocation from EF-Tu.

Belongs to the EF-Ts family.

The protein localises to the cytoplasm. Functionally, associates with the EF-Tu.GDP complex and induces the exchange of GDP to GTP. It remains bound to the aminoacyl-tRNA.EF-Tu.GTP complex up to the GTP hydrolysis stage on the ribosome. This is Elongation factor Ts from Oleidesulfovibrio alaskensis (strain ATCC BAA-1058 / DSM 17464 / G20) (Desulfovibrio alaskensis).